Consider the following 334-residue polypeptide: Ornithine carbamoyltransferase (334 aa).

Carbamoyl phosphate contacts are provided by residues 56–59 (STRT), Gln83, Arg107, and 134–137 (HPTQ). L-ornithine contacts are provided by residues Asn168, Asp232, and 236 to 237 (SM). Residues 274 to 275 (CL) and Arg320 contribute to the carbamoyl phosphate site.

The protein belongs to the aspartate/ornithine carbamoyltransferase superfamily. OTCase family.

The protein resides in the cytoplasm. It carries out the reaction carbamoyl phosphate + L-ornithine = L-citrulline + phosphate + H(+). It participates in amino-acid biosynthesis; L-arginine biosynthesis; L-arginine from L-ornithine and carbamoyl phosphate: step 1/3. Functionally, reversibly catalyzes the transfer of the carbamoyl group from carbamoyl phosphate (CP) to the N(epsilon) atom of ornithine (ORN) to produce L-citrulline. The sequence is that of Ornithine carbamoyltransferase from Shigella sonnei (strain Ss046).